Reading from the N-terminus, the 309-residue chain is Ribonuclease Z (309 aa).

Positions 63, 65, 67, 68, 141, 212, and 270 each coordinate Zn(2+). The Proton acceptor role is filled by aspartate 67.

It belongs to the RNase Z family. As to quaternary structure, homodimer. The cofactor is Zn(2+).

It carries out the reaction Endonucleolytic cleavage of RNA, removing extra 3' nucleotides from tRNA precursor, generating 3' termini of tRNAs. A 3'-hydroxy group is left at the tRNA terminus and a 5'-phosphoryl group is left at the trailer molecule.. In terms of biological role, zinc phosphodiesterase, which displays some tRNA 3'-processing endonuclease activity. Probably involved in tRNA maturation, by removing a 3'-trailer from precursor tRNA. This is Ribonuclease Z from Lactobacillus gasseri (strain ATCC 33323 / DSM 20243 / BCRC 14619 / CIP 102991 / JCM 1131 / KCTC 3163 / NCIMB 11718 / NCTC 13722 / AM63).